We begin with the raw amino-acid sequence, 215 residues long: MRKRISAIIMTLFMVFMSCNNGGPELKSDEVAKSDGTVLDLAKISKKIKDAVEFAASVKEIETLVKSIDELAKTIGQKLTKDTGVLAADANNNNGGLIAGVYGIVTDVGTKLDGLLKVNGISEDIKTKINDSKSKGTAFLSKVKGDDDLCKKDATDAHAKNAIDKNDNTGGKGKTELIALNTAIDELLKAANEAVEAAIKELTAPVKAEKPSQNN.

The first 18 residues, 1–18 (MRKRISAIIMTLFMVFMS), serve as a signal peptide directing secretion. Cysteine 19 carries the N-palmitoyl cysteine lipid modification. Cysteine 19 carries the S-diacylglycerol cysteine lipid modification.

It belongs to the variable small protein (Vsp) family.

The protein localises to the cell outer membrane. In terms of biological role, the Vlp and Vsp proteins are antigenically distinct proteins, only one vlp or vsp gene is transcriptionally active at any one time. Switching between these genes is a mechanism of host immune response evasion. This Borrelia hermsii protein is Variable small protein 2.